The primary structure comprises 259 residues: Isoprenyl transferase (259 aa).

Aspartate 33 is an active-site residue. Aspartate 33 provides a ligand contact to Mg(2+). Substrate contacts are provided by residues 34–37 (GNRR), tryptophan 38, histidine 51, and 79–81 (STE). The active-site Proton acceptor is asparagine 82. Residues arginine 86, arginine 208, and 214 to 216 (RMS) each bind substrate. Glutamate 227 provides a ligand contact to Mg(2+).

The protein belongs to the UPP synthase family. In terms of assembly, homodimer. Mg(2+) is required as a cofactor.

In terms of biological role, catalyzes the condensation of isopentenyl diphosphate (IPP) with allylic pyrophosphates generating different type of terpenoids. This is Isoprenyl transferase from Streptomyces fradiae (Streptomyces roseoflavus).